The following is a 78-amino-acid chain: MKLTCMMIVAVLFLTAWTFATADDPRNGLGNLFSNAHHEMKNPEASKLNKRWCKQSGEMCNLLDQNCCDGYCIVLVCT.

The signal sequence occupies residues 1–22; the sequence is MKLTCMMIVAVLFLTAWTFATA. A propeptide spanning residues 23-49 is cleaved from the precursor; sequence DDPRNGLGNLFSNAHHEMKNPEASKLN. 3 disulfide bridges follow: C53-C68, C60-C72, and C67-C77. The residue at position 59 (M59) is a Methionine sulfoxide; partial.

This sequence belongs to the conotoxin O1 superfamily. Expressed by the venom duct.

The protein resides in the secreted. In terms of biological role, delta-conotoxins bind to site 6 of voltage-gated sodium channels (Nav) and inhibit the inactivation process. Binding of this toxin is strongly calcium-dependent but not voltage-dependent. The binding site is most likely on the extracellular side of the sodium channel. Binds receptor sites on both mollusk and rat central nervous system, but despite its high affinity binding to rat sodium channel, it has no functional effect in vivo and in vitro on it. Also has no effect on Gambusia fish. Is important in mollusk for the paralysis of the prey. Upon injection of the peptide, a subordinate lobster assumes an exaggerated dominant posture (of a 'King-Kong' lobster!). The polypeptide is Delta-conotoxin TxVIA (Conus textile (Cloth-of-gold cone)).